The following is a 291-amino-acid chain: Pituitary-specific positive transcription factor 1 (291 aa).

Residues 5 to 13 (AFTSADTFI) carry the 9aaTAD motif. A POU-specific domain is found at 124–198 (MDSPEIRELE…ILSKWLEEAE (75 aa)). The homeobox DNA-binding region spans 214-273 (KRKRRTTISIAAKDALERHFGEQNKPSSQEIMRMAEELNLEKEVVRVWFCNRRQREKRVK).

It belongs to the POU transcription factor family. Class-1 subfamily. As to quaternary structure, interacts with PITX1. Interacts with LHX3. Interacts with ELK1.

It localises to the nucleus. Its function is as follows. Transcription factor involved in the specification of the lactotrope, somatotrope, and thyrotrope phenotypes in the developing anterior pituitary. Activates growth hormone and prolactin genes. Specifically binds to the consensus sequence 5'-TAAAT-3'. The sequence is that of Pituitary-specific positive transcription factor 1 (POU1F1) from Macaca mulatta (Rhesus macaque).